We begin with the raw amino-acid sequence, 80 residues long: MDTRFVQAHKEARWALGLTLLYLAVWLVAAYLSGVAPGFTGFPRWFEMACILTPLLFIGLCWAMVKFIYRDIPLEDDDAA.

2 consecutive transmembrane segments (helical) span residues 15-35 (ALGL…LSGV) and 45-65 (WFEM…WAMV).

It to H.influenzae HI_0974B.

It localises to the cell membrane. This is an uncharacterized protein from Escherichia coli (strain K12).